The primary structure comprises 132 residues: Small ribosomal subunit protein uS9 (132 aa).

This sequence belongs to the universal ribosomal protein uS9 family.

This Mycoplasma genitalium (strain ATCC 33530 / DSM 19775 / NCTC 10195 / G37) (Mycoplasmoides genitalium) protein is Small ribosomal subunit protein uS9 (rpsI).